We begin with the raw amino-acid sequence, 379 residues long: Alternative oxidase 1, mitochondrial (379 aa).

Over residues 33–50 (TTTTSTKSRSSTSTAATT) the composition is skewed to low complexity. The disordered stretch occupies residues 33-76 (TTTTSTKSRSSTSTAATTVGNSNPKSPIDEDNLEKPGTIPTKHK). Fe cation contacts are provided by Glu180, Glu219, and His222. The helical transmembrane segment at 234–256 (WFTRSIIYIGQGVFTNIFFLVYL) threads the bilayer. 4 residues coordinate Fe cation: Glu270, Glu271, Glu326, and His329.

This sequence belongs to the alternative oxidase family. The cofactor is Fe cation.

It is found in the mitochondrion inner membrane. Its function is as follows. Catalyzes cyanide-resistant oxygen consumption. May increase respiration when the cytochrome respiratory pathway is restricted, or in response to low temperatures. This Candida albicans (Yeast) protein is Alternative oxidase 1, mitochondrial (AOX1).